The following is a 437-amino-acid chain: Sodium/bile acid cotransporter 4 (437 aa).

Topologically, residues 1–103 are extracellular; the sequence is MDGLDNTTRL…PPFWDTPLNH (103 aa). 3 N-linked (GlcNAc...) asparagine glycosylation sites follow: Asn-6, Asn-20, and Asn-26. The interval 16-84 is disordered; it reads LLPDNLTLSP…GGVAGQDSST (69 aa). A compositionally biased stretch (low complexity) spans 21-50; it reads LTLSPNASSTSASTLSPLPVTSSPSPGLSL. The helical transmembrane segment at 104–124 threads the bilayer; it reads GLNVFVGAALCITMLGLGCTV. At 125–140 the chain is on the cytoplasmic side; that stretch reads DVNHFGAHVRRPVGAL. A helical membrane pass occupies residues 141–161; that stretch reads LAALCQFGFLPLLAFLLALAF. Over 162 to 197 the chain is Extracellular; sequence KLDEVAAVAVLLCGCCPGGNLSNLMSLLVDGDMNLS. Asn-181 and Asn-195 each carry an N-linked (GlcNAc...) asparagine glycan. A helical transmembrane segment spans residues 198–218; sequence IIMTISSTLLALVLMPLCLWI. Over 219 to 233 the chain is Cytoplasmic; that stretch reads YSRAWINTPLVQLLP. A helical transmembrane segment spans residues 234 to 254; it reads LGAVTLTLCSTLIPIGLGVFI. Over 255–267 the chain is Extracellular; sequence RYKYNRVADYIVK. Residues 268-288 traverse the membrane as a helical segment; it reads VSLCSLLVTLVVLFIMTGTML. Over 289–291 the chain is Cytoplasmic; it reads GPE. The helical transmembrane segment at 292-312 threads the bilayer; that stretch reads LLASIPAAVYVVAIFMPLAGY. Over 313 to 360 the chain is Extracellular; sequence ASGYGLATLFHLPPNCKRTVCLETGSQNVQLCTAILKLAFPPRFIGSM. Residues 361–381 form a helical membrane-spanning segment; it reads YMFPLLYALFQSAEAGVFVLI. Over 382 to 437 the chain is Cytoplasmic; that stretch reads YKMYGSEILHKREALDEDDDTDISYKKLKEEELADTSYGTVGTDDLVLMETTQTSL.

Belongs to the bile acid:sodium symporter (BASS) (TC 2.A.28) family. In terms of processing, activated following N-terminal proteolytic cleavage by thrombin and/or proteases. In terms of tissue distribution, mainly expressed in the central nervous system cholinergic neurons. Expressed (at protein level) in motor regions of the spinal cord and rhombencephalon, in mesopontine cholinergic neurons, the medial habenula, cholinergic areas of the forebrain, and the gut myenteric plexus.

It is found in the cell membrane. Transporter for bile acids. The chain is Sodium/bile acid cotransporter 4 (Slc10a4) from Rattus norvegicus (Rat).